The sequence spans 160 residues: SsrA-binding protein (160 aa).

Belongs to the SmpB family.

It is found in the cytoplasm. Its function is as follows. Required for rescue of stalled ribosomes mediated by trans-translation. Binds to transfer-messenger RNA (tmRNA), required for stable association of tmRNA with ribosomes. tmRNA and SmpB together mimic tRNA shape, replacing the anticodon stem-loop with SmpB. tmRNA is encoded by the ssrA gene; the 2 termini fold to resemble tRNA(Ala) and it encodes a 'tag peptide', a short internal open reading frame. During trans-translation Ala-aminoacylated tmRNA acts like a tRNA, entering the A-site of stalled ribosomes, displacing the stalled mRNA. The ribosome then switches to translate the ORF on the tmRNA; the nascent peptide is terminated with the 'tag peptide' encoded by the tmRNA and targeted for degradation. The ribosome is freed to recommence translation, which seems to be the essential function of trans-translation. The sequence is that of SsrA-binding protein from Marinobacter nauticus (strain ATCC 700491 / DSM 11845 / VT8) (Marinobacter aquaeolei).